The following is a 127-amino-acid chain: Cyclin-dependent protein kinase inhibitor SIM (127 aa).

Residues 21–71 (RANTNRDDDGGGCTTPTSSDHKIPPTTATTPPPPPQKPRPPSTPSSLGIRS) form a disordered region. Pro residues predominate over residues 50-63 (TPPPPPQKPRPPST).

Interacts with CDKA-1. Interacts with CYCD2-1, CYCD3-2 and CYCD4-1. Interacts with CDKB1-1. Interacts with CPR5. In terms of tissue distribution, expressed in the shoot apical meristem, leaf primordia and the elongation zone of the root.

The protein localises to the nucleus. In terms of biological role, cyclin-dependent protein kinase (CDK) inhibitor that functions as a repressor of mitosis in the endoreduplication cell cycle. Inhibits the kinase activity of CYCD3-1/CDKA-1, CYCD2-1/CDKA-1 and CYCB1-1/CDKB1-1 complexes in a dose dependent manner. Cooperates with SMR1 and SMR2 to promote endoreplication during leaf development. Required for normal trichome endoreplicating cell cycles. Positive regulator of effector-triggered immunity (ETI). The chain is Cyclin-dependent protein kinase inhibitor SIM from Arabidopsis thaliana (Mouse-ear cress).